The following is a 246-amino-acid chain: Dolichol-phosphate mannosyltransferase subunit 1 (246 aa).

P20, Y22, E24, V49, D51, D104, A105, D106, R133, R220, and K226 together coordinate GDP-alpha-D-mannose. D106 is a Mg(2+) binding site. Mn(2+) is bound at residue D106.

It belongs to the glycosyltransferase 2 family. As to quaternary structure, component of the dolichol-phosphate mannose (DPM) synthase complex composed of DPMS1, DPMS2 and DPMS3; in the complex interacts directly with DPMS3. Mg(2+) serves as cofactor. It depends on Mn(2+) as a cofactor. Requires Ca(2+) as cofactor.

The protein localises to the endoplasmic reticulum membrane. The enzyme catalyses a di-trans,poly-cis-dolichyl phosphate + GDP-alpha-D-mannose = a di-trans,poly-cis-dolichyl beta-D-mannosyl phosphate + GDP. It functions in the pathway protein modification; protein glycosylation. Functionally, transfers mannose from GDP-mannose to dolichol monophosphate to form dolichol phosphate mannose (Dol-P-Man) which is the mannosyl donor in pathways leading to N-glycosylation, glycosyl phosphatidylinositol membrane anchoring, and O-mannosylation of proteins; catalytic subunit of the dolichol-phosphate mannose (DPM) synthase complex. Plays a role in plant development and physiology, sensitivity to ammonium stress and endoplasmic reticulum stress response. The sequence is that of Dolichol-phosphate mannosyltransferase subunit 1 from Arabidopsis thaliana (Mouse-ear cress).